The sequence spans 879 residues: Protein translocase subunit SecA (879 aa).

Residues glutamine 87, 105 to 109, and aspartate 509 each bind ATP; that span reads GEGKT. The interval 834 to 879 is disordered; it reads IAEDSEKLKPITGTKKPKRNDPCPCGSGKKYKNCCGQSGPKKGLLA. The Zn(2+) site is built by cysteine 856, cysteine 858, cysteine 867, and cysteine 868.

This sequence belongs to the SecA family. Monomer and homodimer. Part of the essential Sec protein translocation apparatus which comprises SecA, SecYEG and auxiliary proteins SecDF-YajC and YidC. The cofactor is Zn(2+).

It is found in the cell inner membrane. The protein resides in the cytoplasm. The enzyme catalyses ATP + H2O + cellular proteinSide 1 = ADP + phosphate + cellular proteinSide 2.. Part of the Sec protein translocase complex. Interacts with the SecYEG preprotein conducting channel. Has a central role in coupling the hydrolysis of ATP to the transfer of proteins into and across the cell membrane, serving as an ATP-driven molecular motor driving the stepwise translocation of polypeptide chains across the membrane. The protein is Protein translocase subunit SecA of Sulfurovum sp. (strain NBC37-1).